The sequence spans 259 residues: Thiazole synthase (259 aa).

Lys-95 acts as the Schiff-base intermediate with DXP in catalysis. Residues Gly-156, 182 to 183 (AG), and 204 to 205 (AS) each bind 1-deoxy-D-xylulose 5-phosphate.

It belongs to the ThiG family. As to quaternary structure, homotetramer. Forms heterodimers with either ThiH or ThiS.

It localises to the cytoplasm. The enzyme catalyses [ThiS sulfur-carrier protein]-C-terminal-Gly-aminoethanethioate + 2-iminoacetate + 1-deoxy-D-xylulose 5-phosphate = [ThiS sulfur-carrier protein]-C-terminal Gly-Gly + 2-[(2R,5Z)-2-carboxy-4-methylthiazol-5(2H)-ylidene]ethyl phosphate + 2 H2O + H(+). The protein operates within cofactor biosynthesis; thiamine diphosphate biosynthesis. Catalyzes the rearrangement of 1-deoxy-D-xylulose 5-phosphate (DXP) to produce the thiazole phosphate moiety of thiamine. Sulfur is provided by the thiocarboxylate moiety of the carrier protein ThiS. In vitro, sulfur can be provided by H(2)S. The chain is Thiazole synthase from Corynebacterium efficiens (strain DSM 44549 / YS-314 / AJ 12310 / JCM 11189 / NBRC 100395).